Here is a 30-residue protein sequence, read N- to C-terminus: Poly-His-poly-Gly peptide 2 (30 aa).

A compositionally biased stretch (basic residues) spans E1–G18. Positions E1–A30 are disordered. Residues V19–A30 show a composition bias toward gly residues.

Expressed by the venom gland.

It localises to the secreted. Functionally, may serve as a metalloproteinase inhibitor during glandular storage. Their inhibition may be instantly disengaged, by dilution or physiochemical change, when venom is injected into tissue of the victim. In Atheris nitschei (Great lakes bush viper), this protein is Poly-His-poly-Gly peptide 2.